The following is a 757-amino-acid chain: MAFISRSKRYQSKARVYLSLPRSSNSSLFSLPRLFSTIEETQTPANANPETQSPDAKSETKKNLTSTETRPLRERFQRGKRQNHEKLEDTICRMMDNRAWTTRLQNSIRDLVPEWDHSLVYNVLHGAKKLEHALQFFRWTERSGLIRHDRDTHMKMIKMLGEVSKLNHARCILLDMPEKGVPWDEDMFVVLIESYGKAGIVQESVKIFQKMKDLGVERTIKSYNSLFKVILRRGRYMMAKRYFNKMVSEGVEPTRHTYNLMLWGFFLSLRLETALRFFEDMKTRGISPDDATFNTMINGFCRFKKMDEAEKLFVEMKGNKIGPSVVSYTTMIKGYLAVDRVDDGLRIFEEMRSSGIEPNATTYSTLLPGLCDAGKMVEAKNILKNMMAKHIAPKDNSIFLKLLVSQSKAGDMAAATEVLKAMATLNVPAEAGHYGVLIENQCKASAYNRAIKLLDTLIEKEIILRHQDTLEMEPSAYNPIIEYLCNNGQTAKAEVLFRQLMKRGVQDQDALNNLIRGHAKEGNPDSSYEILKIMSRRGVPRESNAYELLIKSYMSKGEPGDAKTALDSMVEDGHVPDSSLFRSVIESLFEDGRVQTASRVMMIMIDKNVGIEDNMDLIAKILEALLMRGHVEEALGRIDLLNQNGHTADLDSLLSVLSEKGKTIAALKLLDFGLERDLSLEFSSYDKVLDALLGAGKTLNAYSVLCKIMEKGSSTDWKSSDELIKSLNQEGNTKQADVLSRMIKKGQGIKKQNNVSL.

Polar residues predominate over residues 39 to 55 (EETQTPANANPETQSPD). A disordered region spans residues 39 to 82 (EETQTPANANPETQSPDAKSETKKNLTSTETRPLRERFQRGKRQ). The segment covering 70-82 (RPLRERFQRGKRQ) has biased composition (basic and acidic residues). PPR repeat units follow at residues 149–183 (DRDT…GVPW), 184–218 (DEDM…GVER), 219–253 (TIKS…GVEP), 254–288 (TRHT…GISP), 289–323 (DDAT…KIGP), 324–358 (SVVS…GIEP), 359–393 (NATT…HIAP), 395–429 (DNSI…NVPA), 430–464 (EAGH…EIIL), 473–507 (EPSA…GVQD), 510–541 (ALNN…GVPR), 542–576 (ESNA…GHVP), 577–611 (DSSL…NVGI), 614–648 (NMDL…GHTA), 651–680 (DSLL…DLSL), and 681–715 (EFSS…GSST).

This sequence belongs to the PPR family. P subfamily. Component of the mitochondrial ribosome large subunit.

The protein resides in the mitochondrion. This chain is Large ribosomal subunit protein mL102 (rPPR5), found in Arabidopsis thaliana (Mouse-ear cress).